The primary structure comprises 67 residues: Large ribosomal subunit protein bL35 (67 aa).

The interval 22–45 is disordered; sequence GKIKRWKSGGAHYNTKKSSKRKRH. Residues 35–45 are compositionally biased toward basic residues; that stretch reads NTKKSSKRKRH.

It belongs to the bacterial ribosomal protein bL35 family.

This is Large ribosomal subunit protein bL35 from Aquifex aeolicus (strain VF5).